The primary structure comprises 368 residues: Ceramide synthase hyl-1 (368 aa).

The next 7 helical transmembrane spans lie at 27-47 (FVDL…RILW), 92-112 (ILEC…GLYV), 138-158 (IWWY…GSTF), 165-185 (FWQL…SWTI), 191-211 (GTLI…GKLV), 225-245 (FVLF…FIVI), and 275-295 (LIVF…FIIL). Residues 90 to 303 (KKILECFWRF…ILRIAYRTST (214 aa)) form the TLC domain. Positions 306–368 (QAKDVRSDSD…ARHRRAPRKE (63 aa)) are disordered. The segment covering 343 to 353 (TDDDDDEGEEE) has biased composition (acidic residues). Positions 357–368 (RKARHRRAPRKE) are enriched in basic residues.

Belongs to the sphingosine N-acyltransferase family.

It localises to the membrane. The enzyme catalyses a very long-chain fatty acyl-CoA + a sphingoid base = an N-(very-long-chain fatty acyl)-sphingoid base + CoA + H(+). It catalyses the reaction 15-methylhexadecasphinganine + a fatty acyl-CoA = an N-acyl-15-methylhexadecasphinganine + CoA + H(+). The catalysed reaction is a fatty acyl-CoA + sphinganine = an N-acylsphinganine + CoA + H(+). It carries out the reaction sphinganine + tetradecanoyl-CoA = N-(tetradecanoyl)-sphinganine + CoA + H(+). The enzyme catalyses hexacosanoyl-CoA + sphinganine = N-hexacosanoylsphinganine + CoA + H(+). It functions in the pathway lipid metabolism; sphingolipid metabolism. Catalyzes the acylation of sphingoid bases to form ceramides, which are key players in cell signaling events such as extending lifespan and enhancing stress resistance. C.elegans contain specific sphingoid bases, which are unique or different in structure compared to the sphingoid bases found in other animals. Two examples of these distinctive compounds are: 15-methylhexadecasphinganine and 15-methylhexadecasphing-4-enine. Exhibits substrate preference for fatty acyl-coA chains containing carbon chain length (C16-C18) and very long chains (24 carbons and more). This Caenorhabditis elegans protein is Ceramide synthase hyl-1 (hyl-1).